The chain runs to 200 residues: Ribonuclease T2 (200 aa).

A disulfide bond links Cys17 and Cys22. Residue His32 is part of the active site. Cysteines 42 and 89 form a disulfide. N-linked (GlcNAc...) asparagine glycosylation is found at Asn43 and Asn73. Residues Glu82 and His86 contribute to the active site. An N-linked (GlcNAc...) asparagine glycan is attached at Asn116. 2 cysteine pairs are disulfide-bonded: Cys152–Cys188 and Cys170–Cys180.

It belongs to the RNase T2 family.

It is found in the secreted. The protein resides in the lysosome lumen. The protein localises to the endoplasmic reticulum lumen. Its subcellular location is the mitochondrion intermembrane space. It carries out the reaction a ribonucleotidyl-ribonucleotide-RNA + H2O = a 3'-end 3'-phospho-ribonucleotide-RNA + a 5'-end dephospho-ribonucleoside-RNA + H(+). The enzyme catalyses an adenylyl-uridine-RNA = a 3'-end 2',3'-cyclophospho-AMP-RNA + a 5'-end dephospho-uridine-RNA. It catalyses the reaction a guanylyl-uridine-RNA = a 3'-end 2',3'-cyclophospho-GMP-RNA + a 5'-end dephospho-uridine-RNA. With respect to regulation, inhibited by Zn(2+) and Cu(2+). In terms of biological role, ribonuclease that plays an essential role in innate immune response by recognizing and degrading RNAs from microbial pathogens that are subsequently sensed by TLR8. Cleaves preferentially single-stranded RNA molecules between purine and uridine residues, which critically contributes to the supply of catabolic uridine and the generation of purine-2',3'-cyclophosphate-terminated oligoribonucleotides. In turn, RNase T2 degradation products promote the RNA-dependent activation of TLR8. In plasmacytoid dendritic cells, it cooperates with PLD3 or PLD4 5'-&gt;3' exonucleases to process RNA fragments and release 2',3'-cyclic guanosine monophosphate (2',3'-cGMP), a potent stimulatory ligand for TLR7. Also plays a key role in degradation of mitochondrial RNA and processing of non-coding RNA imported from the cytosol into mitochondria. Participates as well in degradation of mitochondrion-associated cytosolic rRNAs. This chain is Ribonuclease T2 (RNASET2), found in Sus scrofa (Pig).